A 394-amino-acid chain; its full sequence is Phosphopentomutase (394 aa).

Mn(2+) is bound by residues D15, D288, H293, D329, H330, and H341.

Belongs to the phosphopentomutase family. Requires Mn(2+) as cofactor.

The protein resides in the cytoplasm. The catalysed reaction is 2-deoxy-alpha-D-ribose 1-phosphate = 2-deoxy-D-ribose 5-phosphate. It carries out the reaction alpha-D-ribose 1-phosphate = D-ribose 5-phosphate. Its pathway is carbohydrate degradation; 2-deoxy-D-ribose 1-phosphate degradation; D-glyceraldehyde 3-phosphate and acetaldehyde from 2-deoxy-alpha-D-ribose 1-phosphate: step 1/2. Its function is as follows. Isomerase that catalyzes the conversion of deoxy-ribose 1-phosphate (dRib-1-P) and ribose 1-phosphate (Rib-1-P) to deoxy-ribose 5-phosphate (dRib-5-P) and ribose 5-phosphate (Rib-5-P), respectively. This chain is Phosphopentomutase (drm), found in Bacillus subtilis (strain 168).